A 164-amino-acid polypeptide reads, in one-letter code: Diphosphoinositol polyphosphate phosphohydrolase 3-beta (164 aa).

Residues R9, 17–19 (KKR), and 38–40 (SSR) each bind substrate. Positions 17-144 (KKRAACLCFR…VHAEYLEKLK (128 aa)) constitute a Nudix hydrolase domain. 2 residues coordinate Mg(2+): G49 and E65. A Nudix box motif is present at residues 50 to 71 (GGMEPEEEPGGAAVREVYEEAG). E68 acts as the Proton acceptor in catalysis. A Mg(2+)-binding site is contributed by E69. Residues 89–91 (RKH), R115, and K133 contribute to the substrate site. A disordered region spans residues 144–164 (KLGGSPTNGNSMAPSSPDSDP). Residues 148 to 164 (SPTNGNSMAPSSPDSDP) are compositionally biased toward polar residues.

The protein belongs to the Nudix hydrolase family. DIPP subfamily. Mg(2+) is required as a cofactor. The cofactor is Mn(2+). In terms of tissue distribution, mainly expressed in testis and, at lower level in brain. According to PubMed:12121577, it is also expressed in pancreas and weakly expressed in thymus, prostate, ovary, lung, small intestine and heart.

Its subcellular location is the cytoplasm. The enzyme catalyses diphospho-myo-inositol polyphosphate + H2O = myo-inositol polyphosphate + phosphate.. The catalysed reaction is P(1),P(6)-bis(5'-adenosyl) hexaphosphate + H2O = adenosine 5'-pentaphosphate + AMP + 2 H(+). It carries out the reaction P(1),P(5)-bis(5'-adenosyl) pentaphosphate + H2O = adenosine 5'-tetraphosphate + AMP + 2 H(+). Cleaves a beta-phosphate from the diphosphate groups in PP-InsP5 (diphosphoinositol pentakisphosphate), suggesting that it may play a role in signal transduction. Also able to catalyze the hydrolysis of dinucleoside oligophosphates, with Ap6A and Ap5A being the preferred substrates. The major reaction products are ADP and p4a from Ap6A and ADP and ATP from Ap5A. Also able to hydrolyze 5-phosphoribose 1-diphosphate. The chain is Diphosphoinositol polyphosphate phosphohydrolase 3-beta from Homo sapiens (Human).